We begin with the raw amino-acid sequence, 123 residues long: Keratin-associated protein 2-2 (123 aa).

The segment at cysteine 5–threonine 112 is 11 X 5 AA repeats of C-C-[CDPQRWG]-[APRS]-[CIPSTVD].

It belongs to the KRTAP type 2 family. Interacts with hair keratins.

Functionally, in the hair cortex, hair keratin intermediate filaments are embedded in an interfilamentous matrix, consisting of hair keratin-associated proteins (KRTAP), which are essential for the formation of a rigid and resistant hair shaft through their extensive disulfide bond cross-linking with abundant cysteine residues of hair keratins. The matrix proteins include the high-sulfur and high-glycine-tyrosine keratins. This Homo sapiens (Human) protein is Keratin-associated protein 2-2 (KRTAP2-2).